The following is a 156-amino-acid chain: Transcription antitermination protein NusB (156 aa).

It belongs to the NusB family.

In terms of biological role, involved in transcription antitermination. Required for transcription of ribosomal RNA (rRNA) genes. Binds specifically to the boxA antiterminator sequence of the ribosomal RNA (rrn) operons. The polypeptide is Transcription antitermination protein NusB (Clostridium kluyveri (strain ATCC 8527 / DSM 555 / NBRC 12016 / NCIMB 10680 / K1)).